Consider the following 811-residue polypeptide: Ent-13-epi-manoyl oxide synthase KSL2, chloroplastic (811 aa).

A chloroplast-targeting transit peptide spans 1-49 (MALPLSTCLLFHPKESRSRRFCFSPASAASLKSGLHSATSAKIASMPTC). The Mg(2+) site is built by D550, D554, N694, and E702. A DDXXD motif motif is present at residues 550 to 554 (DDFFD).

This sequence belongs to the terpene synthase family. Mg(2+) is required as a cofactor.

It localises to the plastid. The protein localises to the chloroplast. It carries out the reaction ent-8alpha-hydroxylabd-13-en-15-yl diphosphate = ent-13-epi-manoyl oxide + diphosphate. It functions in the pathway secondary metabolite biosynthesis; terpenoid biosynthesis. Its function is as follows. Involved in diterpenoid biosynthesis. Catalyzes the conversion of ent-8alpha-hydroxylabd-13-en-15-yl diphosphate to ent-13-epi-manoyl oxide. The polypeptide is Ent-13-epi-manoyl oxide synthase KSL2, chloroplastic (Salvia miltiorrhiza (Chinese sage)).